Consider the following 161-residue polypeptide: Cyclic pyranopterin monophosphate synthase (161 aa).

Residues 75–77 (LCH) and 113–114 (ME) each bind substrate. D128 is a catalytic residue.

Belongs to the MoaC family. Homohexamer; trimer of dimers.

The enzyme catalyses (8S)-3',8-cyclo-7,8-dihydroguanosine 5'-triphosphate = cyclic pyranopterin phosphate + diphosphate. It functions in the pathway cofactor biosynthesis; molybdopterin biosynthesis. Its function is as follows. Catalyzes the conversion of (8S)-3',8-cyclo-7,8-dihydroguanosine 5'-triphosphate to cyclic pyranopterin monophosphate (cPMP). This chain is Cyclic pyranopterin monophosphate synthase, found in Shigella sonnei (strain Ss046).